We begin with the raw amino-acid sequence, 418 residues long: Serine/threonine-protein kinase Sgk1 (418 aa).

The tract at residues 50 to 78 (PQEPELLNENSSPPPSPSQQINLGPSSNP) is disordered. The span at 68–78 (QQINLGPSSNP) shows a compositional bias: polar residues. The Protein kinase domain maps to 85–342 (FQFLKIIGKG…FMEIKNHMFF (258 aa)). ATP-binding positions include 91–99 (IGKGSFGKV) and lysine 114. The active-site Proton acceptor is the aspartate 209. In terms of domain architecture, AGC-kinase C-terminal spans 343–418 (SPINWDDLIN…SYAPPMESYL (76 aa)).

This sequence belongs to the protein kinase superfamily. AGC Ser/Thr protein kinase family.

The protein resides in the cytoplasm. It localises to the nucleus. It is found in the endoplasmic reticulum. The enzyme catalyses L-seryl-[protein] + ATP = O-phospho-L-seryl-[protein] + ADP + H(+). It catalyses the reaction L-threonyl-[protein] + ATP = O-phospho-L-threonyl-[protein] + ADP + H(+). Functionally, protein kinase that may play an important role in cellular stress response. Plays an important role in activating certain potassium, sodium, and chloride channels, suggesting an involvement in the regulation of processes such as cell survival, neuronal excitability, and renal sodium excretion. The protein is Serine/threonine-protein kinase Sgk1 (sgk1) of Xenopus tropicalis (Western clawed frog).